We begin with the raw amino-acid sequence, 307 residues long: Aspartate carbamoyltransferase catalytic subunit (307 aa).

Positions 55 and 56 each coordinate carbamoyl phosphate. Lysine 85 is an L-aspartate binding site. Arginine 106, histidine 135, and glutamine 138 together coordinate carbamoyl phosphate. L-aspartate-binding residues include arginine 168 and arginine 230. Carbamoyl phosphate is bound by residues leucine 268 and proline 269.

The protein belongs to the aspartate/ornithine carbamoyltransferase superfamily. ATCase family. As to quaternary structure, heterododecamer (2C3:3R2) of six catalytic PyrB chains organized as two trimers (C3), and six regulatory PyrI chains organized as three dimers (R2).

It catalyses the reaction carbamoyl phosphate + L-aspartate = N-carbamoyl-L-aspartate + phosphate + H(+). The protein operates within pyrimidine metabolism; UMP biosynthesis via de novo pathway; (S)-dihydroorotate from bicarbonate: step 2/3. Catalyzes the condensation of carbamoyl phosphate and aspartate to form carbamoyl aspartate and inorganic phosphate, the committed step in the de novo pyrimidine nucleotide biosynthesis pathway. This chain is Aspartate carbamoyltransferase catalytic subunit, found in Photorhabdus laumondii subsp. laumondii (strain DSM 15139 / CIP 105565 / TT01) (Photorhabdus luminescens subsp. laumondii).